The sequence spans 224 residues: Transposase for insertion sequence-like element IS431mec (224 aa).

The H-T-H motif DNA-binding region spans 33–52 (EILRERGVNVHHSTVYRWVQ). Residues 73-222 (WRIDETYIKI…SPCHEISIML (150 aa)) form the Integrase catalytic domain.

Functionally, involved in the transposition of the insertion sequence. This is Transposase for insertion sequence-like element IS431mec (tnp) from Staphylococcus aureus (strain NCTC 8325 / PS 47).